The following is a 387-amino-acid chain: Gibberellic acid methyltransferase 2 (387 aa).

Tyr33 is an S-adenosyl-L-homocysteine binding site. Gibberellin A4 is bound at residue Gln40. Residues Cys74, Asn79, Asp113, Leu114, Ser146, and Phe147 each coordinate S-adenosyl-L-homocysteine. Gibberellin A4 is bound by residues His167 and Trp168. The Mg(2+) site is built by Asn185, Arg275, Asp276, Phe278, and Asn279.

Belongs to the methyltransferase superfamily. Type-7 methyltransferase family. SABATH subfamily. Mg(2+) is required as a cofactor. In terms of tissue distribution, expressed in siliques and germinating seeds. Not detected in leaves, stems, flowers and roots.

The enzyme catalyses gibberellin A4 + S-adenosyl-L-methionine = O-methyl gibberellin A4 + S-adenosyl-L-homocysteine. Down-regulated by Zn(2+), Cu(2+) and Fe(3+). No effect of K(+), NH(4+), Na(+), Ca(2+), Mg(2+), Mn(2+) and Fe(2+). Its function is as follows. Methylates the carboxyl group of several gibberellins (GAs). Substrate preference is GA4 &gt; GA34 &gt; GA9 &gt; GA3 &gt; GA1 &gt; GA51 &gt; GA20. No activity with diterpenes abietic acid and ent-kaurenoic acid. This chain is Gibberellic acid methyltransferase 2 (GAMT2), found in Arabidopsis thaliana (Mouse-ear cress).